The chain runs to 721 residues: Fatty acid oxidation complex subunit alpha (721 aa).

The interval 1–190 (MIYEGKAITV…KVGVVDAIVA (190 aa)) is enoyl-CoA hydratase/isomerase. Asp-297 serves as a coordination point for substrate. The segment at 312 to 721 (RDVKQAAVLG…SFFGQASSEV (410 aa)) is 3-hydroxyacyl-CoA dehydrogenase. Residues Met-325, Asp-344, 401 to 403 (VVE), Lys-408, and Ser-430 each bind NAD(+). Catalysis depends on His-451, which acts as the For 3-hydroxyacyl-CoA dehydrogenase activity. Asn-454 contacts NAD(+). Substrate-binding residues include Asn-501 and Tyr-660.

The protein in the N-terminal section; belongs to the enoyl-CoA hydratase/isomerase family. In the C-terminal section; belongs to the 3-hydroxyacyl-CoA dehydrogenase family. In terms of assembly, heterotetramer of two alpha chains (FadB) and two beta chains (FadA).

It catalyses the reaction a (3S)-3-hydroxyacyl-CoA + NAD(+) = a 3-oxoacyl-CoA + NADH + H(+). The enzyme catalyses a (3S)-3-hydroxyacyl-CoA = a (2E)-enoyl-CoA + H2O. It carries out the reaction a 4-saturated-(3S)-3-hydroxyacyl-CoA = a (3E)-enoyl-CoA + H2O. The catalysed reaction is (3S)-3-hydroxybutanoyl-CoA = (3R)-3-hydroxybutanoyl-CoA. It catalyses the reaction a (3Z)-enoyl-CoA = a 4-saturated (2E)-enoyl-CoA. The enzyme catalyses a (3E)-enoyl-CoA = a 4-saturated (2E)-enoyl-CoA. It participates in lipid metabolism; fatty acid beta-oxidation. Its function is as follows. Involved in the aerobic and anaerobic degradation of long-chain fatty acids via beta-oxidation cycle. Catalyzes the formation of 3-oxoacyl-CoA from enoyl-CoA via L-3-hydroxyacyl-CoA. It can also use D-3-hydroxyacyl-CoA and cis-3-enoyl-CoA as substrate. This is Fatty acid oxidation complex subunit alpha from Pseudomonas syringae pv. tomato (strain ATCC BAA-871 / DC3000).